Reading from the N-terminus, the 910-residue chain is Seizure 6-like protein 2 (910 aa).

A signal peptide spans 1-27; that stretch reads MGTPKAQHPPPSQLLLLILLSCAWIEG. Residues 28–844 are Extracellular-facing; sequence LPLKEDEMMP…DPSRQLEGGN (817 aa). The disordered stretch occupies residues 70–152; the sequence is PGSDPDPTLA…PLRPEGGEEE (83 aa). Over residues 123 to 145 the composition is skewed to pro residues; that stretch reads LTPPPGTTAPPPPGPASPVPPLR. The cysteines at positions 173 and 202 are disulfide-linked. One can recognise a CUB 1 domain in the interval 173–286; that stretch reads CNNNISEGEG…NGFRIHYQAY (114 aa). An N-linked (GlcNAc...) asparagine glycan is attached at Asn222. The Sushi 1 domain occupies 288–347; that stretch reads LSCGFPPRPAHGDVSVTDLHPGGTATFHCDSGYQLQGEETLICLNGTRPAWTGEPPSCTA. Cystine bridges form between Cys290–Cys330, Cys316–Cys345, Cys349–Cys376, Cys464–Cys508, Cys491–Cys523, Cys527–Cys553, Cys644–Cys686, Cys672–Cys699, Cys705–Cys747, Cys733–Cys764, Cys771–Cys813, and Cys799–Cys828. Residues Asn332, Asn373, Asn473, and Asn517 are each glycosylated (N-linked (GlcNAc...) asparagine). Positions 349–459 constitute a CUB 2 domain; the sequence is CGGTIHNATL…LLLSLRFEAF (111 aa). A Sushi 2 domain is found at 462-525; sequence DRCFPPFLAH…WNDTEPACKA (64 aa). Residues 527–638 form the CUB 3 domain; the sequence is CGGELSEPAG…QGFVLHFKEV (112 aa). Sushi domains follow at residues 642-701, 703-766, and 769-830; these read DTCP…ACQK, MTCA…KCAL, and EPCL…LCKV. A helical membrane pass occupies residues 845-865; sequence LALAILLPLGLVIVLGIGVYI. The Cytoplasmic segment spans residues 866–910; that stretch reads YYTKLQGKSLFGFSGSHSYSPITVESDFSNPLYEAGDTREYEVSI.

It belongs to the SEZ6 family. Expressed exclusively in the brain, predominantly in the neurons. Wide expression in the gray matter of the brain with high levels in the olfactory bulb, anterior olfactory nuclei, hippocampal formation and cerebellar cortex. Detected diffusely and weakly in the white matter, such as the corpus callosum and cerebellar medulla. In the cerebellar cortex, intensely expressed in Purkinje cells (PC) and granule cells. Detected also in interneurons in the molecular layer. Up-regulated at two weeks after birth.

The protein resides in the cell membrane. The protein localises to the endoplasmic reticulum membrane. Its function is as follows. May contribute to specialized endoplasmic reticulum functions in neurons. The sequence is that of Seizure 6-like protein 2 (Sez6l2) from Mus musculus (Mouse).